The following is a 470-amino-acid chain: Nucleoporin NUP49 (470 aa).

Residues 1-13 (MSLFGTNTTSQTP) are compositionally biased toward polar residues. The disordered stretch occupies residues 1–92 (MSLFGTNTTS…STTTTTSQPQ (92 aa)). GLFG repeat units lie at residues 17 to 20 (GLFG), 45 to 48 (GLFG), 63 to 66 (GLFG), 79 to 82 (GLFG), 96 to 99 (GLFG), 111 to 114 (GLFG), 127 to 130 (GLFG), 142 to 145 (GLFG), 156 to 159 (GLFG), 168 to 171 (GLFG), 181 to 184 (GLFG), and 193 to 197 (GLFGQ). Residues 20–31 (GTTTSQSAQTGS) show a composition bias toward low complexity. Positions 32–74 (LFGTATSQPQQTGGLFGSTATQTPSSQLQSTGLFGSTTATSQP) are enriched in polar residues. Over residues 75–92 (QQTGGLFGSTTTTTSQPQ) the composition is skewed to low complexity. A disordered region spans residues 196–221 (GQSTTQPQQQQNATPGLTMGQSTNTQ). The segment covering 197-206 (QSTTQPQQQQ) has biased composition (low complexity). Positions 207–221 (NATPGLTMGQSTNTQ) are enriched in polar residues. 2 coiled-coil regions span residues 239–270 (TRFNDLTEALQQEIAKIDEEIQKCIRDKEAVD) and 375–401 (FSKTADEMEEMMKKFEKTITEIEAHLT).

The protein belongs to the nucleoporin GLFG family. Component of the nuclear pore complex (NPC). NPC constitutes the exclusive means of nucleocytoplasmic transport. NPCs allow the passive diffusion of ions and small molecules and the active, nuclear transport receptor-mediated bidirectional transport of macromolecules such as proteins, RNAs, ribonucleoparticles (RNPs), and ribosomal subunits across the nuclear envelope. Due to its 8-fold rotational symmetry, all subunits are present with 8 copies or multiples thereof.

It is found in the nucleus. Its subcellular location is the nuclear pore complex. It localises to the nucleus membrane. In terms of biological role, functions as a component of the nuclear pore complex (NPC). NPC components, collectively referred to as nucleoporins (NUPs), can play the role of both NPC structural components and of docking or interaction partners for transiently associated nuclear transport factors. Active directional transport is assured by both, a Phe-Gly (FG) repeat affinity gradient for these transport factors across the NPC and a transport cofactor concentration gradient across the nuclear envelope (GSP1 and GSP2 GTPases associated predominantly with GTP in the nucleus, with GDP in the cytoplasm). NUP49 plays an important role in several nuclear transport pathways including poly(A)+ RNA, tRNA, and pre-ribosome transport. The sequence is that of Nucleoporin NUP49 (NUP49) from Chaetomium thermophilum (strain DSM 1495 / CBS 144.50 / IMI 039719) (Thermochaetoides thermophila).